Consider the following 208-residue polypeptide: MAEAEGSSLLLLPPPPPPPRMAEVEAPTAAETDMKQYQGSGGVAMDVERSRFPYCVVWTPIPVLTWFFPIIGHMGICTSTGVIRDFAGPYFVSEDNMAFGKPAKYWKLDPAQVYASGPNAWDTAVHDASEEYKHRMHNLCCDNCHSHVALALNLMRYNNSTNWNMVTLCFFCLLYGKYVSVGAFVKTWLPFILLLGIILTVSLVFNLR.

The interval 1–26 (MAEAEGSSLLLLPPPPPPPRMAEVEA) is disordered. The Extracellular segment spans residues 1-55 (MAEAEGSSLLLLPPPPPPPRMAEVEAPTAAETDMKQYQGSGGVAMDVERSRFPYC). Residues 56-76 (VVWTPIPVLTWFFPIIGHMGI) traverse the membrane as a helical segment. Residues 77–164 (CTSTGVIRDF…MRYNNSTNWN (88 aa)) are Cytoplasmic-facing. Residues 165 to 185 (MVTLCFFCLLYGKYVSVGAFV) traverse the membrane as a helical segment. Position 186 (K186) is a topological domain, extracellular. A helical transmembrane segment spans residues 187 to 207 (TWLPFILLLGIILTVSLVFNL). Residue R208 is a topological domain, cytoplasmic.

In terms of tissue distribution, widely expressed. The highest expression is observed in the brain.

The protein resides in the membrane. Its subcellular location is the cell projection. It is found in the dendrite. This is Transmembrane protein 222 (TMEM222) from Homo sapiens (Human).